A 154-amino-acid chain; its full sequence is Large ribosomal subunit protein uL30 (154 aa).

A disordered region spans residues 114–146 (PTLRLHPPRGGHDGVKHPVKEGGQLGKHDTEGI). The span at 123–144 (GGHDGVKHPVKEGGQLGKHDTE) shows a compositional bias: basic and acidic residues.

This sequence belongs to the universal ribosomal protein uL30 family. In terms of assembly, part of the 50S ribosomal subunit. Binds 5S rRNA.

Its function is as follows. This is one of 5 proteins that mediate the attachment of the 5S rRNA onto the large ribosomal subunit, stabilizing the orientation of adjacent RNA domains. The chain is Large ribosomal subunit protein uL30 from Haloarcula marismortui (strain ATCC 43049 / DSM 3752 / JCM 8966 / VKM B-1809) (Halobacterium marismortui).